We begin with the raw amino-acid sequence, 590 residues long: Proline--tRNA ligase (590 aa).

Belongs to the class-II aminoacyl-tRNA synthetase family. ProS type 1 subfamily. As to quaternary structure, homodimer.

It localises to the cytoplasm. The enzyme catalyses tRNA(Pro) + L-proline + ATP = L-prolyl-tRNA(Pro) + AMP + diphosphate. In terms of biological role, catalyzes the attachment of proline to tRNA(Pro) in a two-step reaction: proline is first activated by ATP to form Pro-AMP and then transferred to the acceptor end of tRNA(Pro). As ProRS can inadvertently accommodate and process non-cognate amino acids such as alanine and cysteine, to avoid such errors it has two additional distinct editing activities against alanine. One activity is designated as 'pretransfer' editing and involves the tRNA(Pro)-independent hydrolysis of activated Ala-AMP. The other activity is designated 'posttransfer' editing and involves deacylation of mischarged Ala-tRNA(Pro). The misacylated Cys-tRNA(Pro) is not edited by ProRS. This is Proline--tRNA ligase from Clavibacter sepedonicus (Clavibacter michiganensis subsp. sepedonicus).